The primary structure comprises 294 residues: DNA adenine methyltransferase YhdJ (294 aa).

The disordered stretch occupies residues 275-294 (TGNLSKRSRLSEVDPDLITK). A compositionally biased stretch (basic and acidic residues) spans 283-294 (RLSEVDPDLITK).

Belongs to the N(4)/N(6)-methyltransferase family.

The enzyme catalyses a 2'-deoxyadenosine in DNA + S-adenosyl-L-methionine = an N(6)-methyl-2'-deoxyadenosine in DNA + S-adenosyl-L-homocysteine + H(+). A beta subtype methylase, recognizes the double-stranded sequence 5'-ATGCAT-3' and methylates A-5. This is DNA adenine methyltransferase YhdJ (yhdJ) from Escherichia coli (strain K12).